The sequence spans 202 residues: Urease accessory protein UreG (202 aa).

11–18 (GPVGSGKT) contributes to the GTP binding site.

Belongs to the SIMIBI class G3E GTPase family. UreG subfamily. In terms of assembly, homodimer. UreD, UreF and UreG form a complex that acts as a GTP-hydrolysis-dependent molecular chaperone, activating the urease apoprotein by helping to assemble the nickel containing metallocenter of UreC. The UreE protein probably delivers the nickel.

Its subcellular location is the cytoplasm. Functionally, facilitates the functional incorporation of the urease nickel metallocenter. This process requires GTP hydrolysis, probably effectuated by UreG. The protein is Urease accessory protein UreG of Magnetococcus marinus (strain ATCC BAA-1437 / JCM 17883 / MC-1).